A 68-amino-acid polypeptide reads, in one-letter code: Probable Sec-independent protein translocase protein TatE (68 aa).

Residues 1 to 21 (MGEISITKLLVVAALIILVFG) form a helical membrane-spanning segment. Residues 43–68 (MNEDDDSAKKTTAEEEAPAQKLSHKE) form a disordered region.

The protein belongs to the TatA/E family. TatE subfamily.

It localises to the cell inner membrane. Its function is as follows. Part of the twin-arginine translocation (Tat) system that transports large folded proteins containing a characteristic twin-arginine motif in their signal peptide across membranes. TatE shares overlapping functions with TatA. The chain is Probable Sec-independent protein translocase protein TatE from Klebsiella pneumoniae subsp. pneumoniae (strain ATCC 700721 / MGH 78578).